The chain runs to 309 residues: Branched-chain-amino-acid aminotransferase (309 aa).

Position 160 is an N6-(pyridoxal phosphate)lysine (K160).

This sequence belongs to the class-IV pyridoxal-phosphate-dependent aminotransferase family. Homohexamer. The cofactor is pyridoxal 5'-phosphate.

The enzyme catalyses L-leucine + 2-oxoglutarate = 4-methyl-2-oxopentanoate + L-glutamate. It carries out the reaction L-isoleucine + 2-oxoglutarate = (S)-3-methyl-2-oxopentanoate + L-glutamate. The catalysed reaction is L-valine + 2-oxoglutarate = 3-methyl-2-oxobutanoate + L-glutamate. It participates in amino-acid biosynthesis; L-isoleucine biosynthesis; L-isoleucine from 2-oxobutanoate: step 4/4. It functions in the pathway amino-acid biosynthesis; L-leucine biosynthesis; L-leucine from 3-methyl-2-oxobutanoate: step 4/4. Its pathway is amino-acid biosynthesis; L-valine biosynthesis; L-valine from pyruvate: step 4/4. Functionally, acts on leucine, isoleucine and valine. The chain is Branched-chain-amino-acid aminotransferase (ilvE) from Escherichia coli O157:H7.